Consider the following 444-residue polypeptide: D(2) dopamine receptor (444 aa).

Residues 1–37 (MDPLNLSWYDDDLERQNWSRPFNGSEGKADRPHYNYY) lie on the Extracellular side of the membrane. 3 N-linked (GlcNAc...) asparagine glycosylation sites follow: Asn-5, Asn-17, and Asn-23. The helical transmembrane segment at 38 to 60 (AMLLTLLIFIIVFGNVLVCMAVS) threads the bilayer. Residues 61–70 (REKALQTTTN) lie on the Cytoplasmic side of the membrane. A helical membrane pass occupies residues 71-93 (YLIVSLAVADLLVATLVMPWVVY). Residues 94–108 (LEVVGEWKFSRIHCD) lie on the Extracellular side of the membrane. A disulfide bond links Cys-107 and Cys-182. Residues 109-130 (IFVTLDVMMCTASILNLCAISI) traverse the membrane as a helical segment. Residues 131–151 (DRYTAVAMPMLYNTRYSSKRR) lie on the Cytoplasmic side of the membrane. Residues 152–172 (VTVMIAIVWVLSFTISCPLLF) traverse the membrane as a helical segment. Topologically, residues 173–188 (GLNNTDQNECIIANPA) are extracellular. Residues 189–213 (FVVYSSIVSFYVPFIVTLLVYIKIY) form a helical membrane-spanning segment. The interaction with PPP1R9B stretch occupies residues 211-374 (KIYIVLRKRR…SQQKEKKATQ (164 aa)). The Cytoplasmic segment spans residues 214–374 (IVLRKRRKRV…SQQKEKKATQ (161 aa)). The tract at residues 282–329 (EMLSSTSPPERTRYSPIPPSHHQLTLPDPSHHGLHSNPDSPAKPEKNG) is disordered. A helical transmembrane segment spans residues 375 to 396 (MLAIVLGVFIICWLPFFITHIL). Residues 397–410 (NIHCDCNIPPVLYS) are Extracellular-facing. A disulfide bond links Cys-400 and Cys-402. A helical transmembrane segment spans residues 411–432 (AFTWLGYVNSAVNPIIYTTFNI). Residues 433–444 (EFRKAFMKILHC) lie on the Cytoplasmic side of the membrane. Residue Cys-444 is the site of S-palmitoyl cysteine attachment.

This sequence belongs to the G-protein coupled receptor 1 family. As to quaternary structure, forms homo- and heterooligomers with DRD4. The interaction with DRD4 may modulate agonist-induced downstream signaling. Interacts with CADPS and CADPS2. Interacts with GPRASP1, PPP1R9B and CLIC6. Interacts with ARRB2. Interacts with HTR2A. Interacts with DRD1. Interacts with KCNA2. Post-translationally, palmitoylated. Palmitoylation which is required for proper localization to the plasma membrane and stability of the receptor could be carried on by ZDHHC4, ZDHHC3 and ZDHHC8. As to expression, expressed in the anterior lobe of the pituitary gland. Expressed ventral tegmental area of the midbrain and the pars compacta of the substantia nigra. Expressed seven times more than isoform short in the caudate nucleus. Expressed in the anterior lobe of the pituitary gland. Expressed in the caudate nucleus. Not expressed in the wider brain.

It localises to the cell membrane. It is found in the golgi apparatus membrane. In terms of biological role, dopamine receptor whose activity is mediated by G proteins which inhibit adenylyl cyclase. Positively regulates postnatal regression of retinal hyaloid vessels via suppression of VEGFR2/KDR activity, downstream of OPN5. The protein is D(2) dopamine receptor (Drd2) of Rattus norvegicus (Rat).